We begin with the raw amino-acid sequence, 131 residues long: Sperm microtubule inner protein 11 (131 aa).

Residues 17 to 44 are disordered; it reads SKKRDKTEETNQKDPVPTRLPPIFSEDG.

Microtubule inner protein component of sperm flagellar doublet microtubules. In terms of tissue distribution, expressed in sperm.

The protein localises to the cytoplasm. The protein resides in the cytoskeleton. It is found in the flagellum axoneme. Microtubule inner protein (MIP) part of the dynein-decorated doublet microtubules (DMTs) in flagellum axoneme. May serve to reinforce and thus stabilize the microtubule structure in the sperm flagella. The protein is Sperm microtubule inner protein 11 (SPMIP11) of Bos taurus (Bovine).